The sequence spans 285 residues: 2-dehydro-3-deoxyphosphooctonate aldolase (285 aa).

Belongs to the KdsA family.

It localises to the cytoplasm. The catalysed reaction is D-arabinose 5-phosphate + phosphoenolpyruvate + H2O = 3-deoxy-alpha-D-manno-2-octulosonate-8-phosphate + phosphate. The protein operates within carbohydrate biosynthesis; 3-deoxy-D-manno-octulosonate biosynthesis; 3-deoxy-D-manno-octulosonate from D-ribulose 5-phosphate: step 2/3. It participates in bacterial outer membrane biogenesis; lipopolysaccharide biosynthesis. The protein is 2-dehydro-3-deoxyphosphooctonate aldolase of Leptothrix cholodnii (strain ATCC 51168 / LMG 8142 / SP-6) (Leptothrix discophora (strain SP-6)).